The following is a 961-amino-acid chain: Glycine dehydrogenase (decarboxylating) (961 aa).

N6-(pyridoxal phosphate)lysine is present on K702.

It belongs to the GcvP family. As to quaternary structure, the glycine cleavage system is composed of four proteins: P, T, L and H. Requires pyridoxal 5'-phosphate as cofactor.

It carries out the reaction N(6)-[(R)-lipoyl]-L-lysyl-[glycine-cleavage complex H protein] + glycine + H(+) = N(6)-[(R)-S(8)-aminomethyldihydrolipoyl]-L-lysyl-[glycine-cleavage complex H protein] + CO2. The glycine cleavage system catalyzes the degradation of glycine. The P protein binds the alpha-amino group of glycine through its pyridoxal phosphate cofactor; CO(2) is released and the remaining methylamine moiety is then transferred to the lipoamide cofactor of the H protein. The sequence is that of Glycine dehydrogenase (decarboxylating) from Rhodopseudomonas palustris (strain BisA53).